The chain runs to 257 residues: 5'-nucleotidase SurE (257 aa).

The a divalent metal cation site is built by aspartate 9, aspartate 10, serine 40, and asparagine 93.

This sequence belongs to the SurE nucleotidase family. The cofactor is a divalent metal cation.

The protein resides in the cytoplasm. It catalyses the reaction a ribonucleoside 5'-phosphate + H2O = a ribonucleoside + phosphate. Its function is as follows. Nucleotidase that shows phosphatase activity on nucleoside 5'-monophosphates. This chain is 5'-nucleotidase SurE, found in Campylobacter hominis (strain ATCC BAA-381 / DSM 21671 / CCUG 45161 / LMG 19568 / NCTC 13146 / CH001A).